Reading from the N-terminus, the 196-residue chain is uncharacterized protein (196 aa).

Belongs to the NAD(P)H dehydrogenase (quinone) family.

This is an uncharacterized protein from Escherichia coli (strain K12).